The primary structure comprises 107 residues: AGDPDAGQKVFLKCAACHKIGPGAKNGVGPSLNGVANRKAGQAEGFAYSDANKNSGLTWDEATFKEYITAPQKKVPGTKMTFPGLPNEADRDNIWAYLSQFKADGSK.

Residues cysteine 14, cysteine 17, histidine 18, and methionine 80 each coordinate heme c.

This sequence belongs to the cytochrome c family. Binds 1 heme c group covalently per subunit.

In terms of biological role, cytochrome c2 is found mainly in purple, non-sulfur, photosynthetic bacteria where it functions as the electron donor to the oxidized bacteriochlorophyll in the photophosphorylation pathway. However, it may also have a role in the respiratory chain and is found in some non-photosynthetic bacteria. The chain is Cytochrome c2 from Rhodoblastus acidophilus (Rhodopseudomonas acidophila).